The following is a 134-amino-acid chain: Gastrin-releasing peptide (134 aa).

An N-terminal signal peptide occupies residues Met-1–Ala-23. A Methionine amide modification is found at Met-50. A propeptide spanning residues Ser-54–Tyr-134 is cleaved from the precursor. The segment at Pro-98–Tyr-134 is disordered. The segment covering Phe-119 to Tyr-134 has biased composition (polar residues).

This sequence belongs to the bombesin/neuromedin-B/ranatensin family.

The protein localises to the secreted. It is found in the cytoplasmic vesicle. The protein resides in the secretory vesicle lumen. Its subcellular location is the cell projection. It localises to the neuron projection. Functionally, stimulates the release of gastrin and other gastrointestinal hormones. Contributes to the perception of prurient stimuli and to the transmission of itch signals in the spinal cord that promote scratching behavior. Contributes primarily to nonhistaminergic itch sensation. In one study, shown to act in the amygdala as part of an inhibitory network which inhibits memory specifically related to learned fear. In another study, shown to act on vasoactive intestinal peptide (VIP)-expressing cells in the auditory cortex, most likely via extrasynaptic diffusion from local and long-range sources, to mediate disinhibition of glutamatergic cells via VIP cell-specific GRPR signaling which leads to enhanced auditory fear memories. Contributes to the regulation of food intake. Inhibits voltage-gated sodium channels but enhances voltage-gated potassium channels in hippocampal neurons. Induces sighing by acting directly on the pre-Botzinger complex, a cluster of several thousand neurons in the ventrolateral medulla responsible for inspiration during respiratory activity. In terms of biological role, induces an itch response through activation of receptors present on mast cells, triggering mast cell degranulation. The protein is Gastrin-releasing peptide (GRP) of Ovis aries (Sheep).